The sequence spans 301 residues: Phosphatidylglycerol--prolipoprotein diacylglyceryl transferase (301 aa).

The next 4 membrane-spanning stretches (helical) occupy residues 10–30 (IAFS…LASF), 57–77 (LLFY…MLFY), 92–112 (VWEG…AVAW), and 119–139 (LQMF…LGFG). Residue Arg-140 coordinates a 1,2-diacyl-sn-glycero-3-phospho-(1'-sn-glycerol). The next 3 membrane-spanning stretches (helical) occupy residues 202–222 (PSQL…LWLF), 230–250 (YAVS…VEFV), and 264–284 (LTRG…LFWL).

This sequence belongs to the Lgt family.

Its subcellular location is the cell inner membrane. The enzyme catalyses L-cysteinyl-[prolipoprotein] + a 1,2-diacyl-sn-glycero-3-phospho-(1'-sn-glycerol) = an S-1,2-diacyl-sn-glyceryl-L-cysteinyl-[prolipoprotein] + sn-glycerol 1-phosphate + H(+). It participates in protein modification; lipoprotein biosynthesis (diacylglyceryl transfer). Functionally, catalyzes the transfer of the diacylglyceryl group from phosphatidylglycerol to the sulfhydryl group of the N-terminal cysteine of a prolipoprotein, the first step in the formation of mature lipoproteins. In Xylella fastidiosa (strain 9a5c), this protein is Phosphatidylglycerol--prolipoprotein diacylglyceryl transferase.